Consider the following 234-residue polypeptide: Glucosamine-6-phosphate deaminase (234 aa).

The Proton acceptor; for enolization step role is filled by Asp-62. Asn-128 (for ring-opening step) is an active-site residue. The Proton acceptor; for ring-opening step role is filled by His-130. The active-site For ring-opening step is Glu-135.

It belongs to the glucosamine/galactosamine-6-phosphate isomerase family. NagB subfamily.

It catalyses the reaction alpha-D-glucosamine 6-phosphate + H2O = beta-D-fructose 6-phosphate + NH4(+). Its pathway is amino-sugar metabolism; N-acetylneuraminate degradation; D-fructose 6-phosphate from N-acetylneuraminate: step 5/5. Its function is as follows. Catalyzes the reversible isomerization-deamination of glucosamine 6-phosphate (GlcN6P) to form fructose 6-phosphate (Fru6P) and ammonium ion. The protein is Glucosamine-6-phosphate deaminase of Streptococcus equi subsp. equi (strain 4047).